A 191-amino-acid polypeptide reads, in one-letter code: dCTP deaminase, dUMP-forming (191 aa).

Residues 101 to 106 (KSSLGR), D119, 127 to 129 (TLE), Q148, Y162, and Q174 contribute to the dCTP site. The Proton donor/acceptor role is filled by E129. Positions 169 to 191 (NRYQGQRGPTASRSHLNFHRTRI) are disordered. Positions 171 to 183 (YQGQRGPTASRSH) are enriched in polar residues.

This sequence belongs to the dCTP deaminase family. As to quaternary structure, homotrimer.

It carries out the reaction dCTP + 2 H2O = dUMP + NH4(+) + diphosphate. Its pathway is pyrimidine metabolism; dUMP biosynthesis; dUMP from dCTP: step 1/1. Bifunctional enzyme that catalyzes both the deamination of dCTP to dUTP and the hydrolysis of dUTP to dUMP without releasing the toxic dUTP intermediate. In Pseudarthrobacter chlorophenolicus (strain ATCC 700700 / DSM 12829 / CIP 107037 / JCM 12360 / KCTC 9906 / NCIMB 13794 / A6) (Arthrobacter chlorophenolicus), this protein is dCTP deaminase, dUMP-forming.